The following is a 485-amino-acid chain: GTPase Obg (485 aa).

The Obg domain occupies 1–159 (MKFVDEVRIF…LTLRLELKLL (159 aa)). The region spanning 160–332 (ADVGLLGFPN…LMDSVAEVLF (173 aa)) is the OBG-type G domain. GTP-binding positions include 166–173 (GFPNAGKS), 191–195 (FTTLV), 213–216 (DIPG), 284–287 (NKLD), and 313–315 (SCA). Mg(2+)-binding residues include Ser-173 and Thr-193. 4 stretches are compositionally biased toward low complexity: residues 367 to 385 (AGAA…AAKK), 394 to 428 (RKAG…PVKK), 437 to 446 (RKSGTAPAKK), and 455 to 474 (RKSG…ATKR). The disordered stretch occupies residues 367 to 485 (AGAAAATKSA…PARKSGGGRS (119 aa)).

Belongs to the TRAFAC class OBG-HflX-like GTPase superfamily. OBG GTPase family. In terms of assembly, monomer. The cofactor is Mg(2+).

It is found in the cytoplasm. In terms of biological role, an essential GTPase which binds GTP, GDP and possibly (p)ppGpp with moderate affinity, with high nucleotide exchange rates and a fairly low GTP hydrolysis rate. Plays a role in control of the cell cycle, stress response, ribosome biogenesis and in those bacteria that undergo differentiation, in morphogenesis control. The sequence is that of GTPase Obg from Myxococcus xanthus (strain DK1622).